The primary structure comprises 321 residues: Protein translocase subunit SecF (321 aa).

The next 6 membrane-spanning stretches (helical) occupy residues 23 to 43, 158 to 178, 189 to 209, 217 to 237, 258 to 280, and 290 to 312; these read VWLI…FSWT, LQTT…YISI, LLAL…LGII, LFAV…VVVF, FAVS…PLIA, and YWFA…ALVP.

This sequence belongs to the SecD/SecF family. SecF subfamily. Forms a complex with SecD. Part of the essential Sec protein translocation apparatus which comprises SecA, SecYEG and auxiliary proteins SecDF. Other proteins may also be involved.

Its subcellular location is the cell inner membrane. In terms of biological role, part of the Sec protein translocase complex. Interacts with the SecYEG preprotein conducting channel. SecDF uses the proton motive force (PMF) to complete protein translocation after the ATP-dependent function of SecA. Probably participates in protein translocation into and across both the cytoplasmic and thylakoid membranes in cyanobacterial cells. This chain is Protein translocase subunit SecF, found in Prochlorococcus marinus (strain SARG / CCMP1375 / SS120).